The chain runs to 441 residues: Serine--tRNA ligase (441 aa).

An L-serine-binding site is contributed by 250–252 (TSE). ATP contacts are provided by residues 281 to 283 (RRE) and Val-297. Position 304 (Glu-304) interacts with L-serine. 368-371 (EIVS) is an ATP binding site. Thr-402 contacts L-serine.

The protein belongs to the class-II aminoacyl-tRNA synthetase family. Type-1 seryl-tRNA synthetase subfamily. In terms of assembly, homodimer. The tRNA molecule binds across the dimer.

The protein resides in the cytoplasm. The catalysed reaction is tRNA(Ser) + L-serine + ATP = L-seryl-tRNA(Ser) + AMP + diphosphate + H(+). The enzyme catalyses tRNA(Sec) + L-serine + ATP = L-seryl-tRNA(Sec) + AMP + diphosphate + H(+). It functions in the pathway aminoacyl-tRNA biosynthesis; selenocysteinyl-tRNA(Sec) biosynthesis; L-seryl-tRNA(Sec) from L-serine and tRNA(Sec): step 1/1. In terms of biological role, catalyzes the attachment of serine to tRNA(Ser). Is also able to aminoacylate tRNA(Sec) with serine, to form the misacylated tRNA L-seryl-tRNA(Sec), which will be further converted into selenocysteinyl-tRNA(Sec). This is Serine--tRNA ligase from Thermoplasma acidophilum (strain ATCC 25905 / DSM 1728 / JCM 9062 / NBRC 15155 / AMRC-C165).